The primary structure comprises 271 residues: ATP synthase subunit a (271 aa).

The next 5 helical transmembrane spans lie at 38–58 (FWTLNIDSMFFSVVLGLLFLL), 100–120 (LIAPLALTIFVWVFLMNLMDL), 146–166 (DVNITLSMALGVFILILFYSI), 220–240 (LIFILIAGLLPWWSQWILNVP), and 242–262 (AIFHILIITLQAFIFMGLTIV).

It belongs to the ATPase A chain family. F-type ATPases have 2 components, CF(1) - the catalytic core - and CF(0) - the membrane proton channel. CF(1) has five subunits: alpha(3), beta(3), gamma(1), delta(1), epsilon(1). CF(0) has three main subunits: a(1), b(2) and c(9-12). The alpha and beta chains form an alternating ring which encloses part of the gamma chain. CF(1) is attached to CF(0) by a central stalk formed by the gamma and epsilon chains, while a peripheral stalk is formed by the delta and b chains.

The protein resides in the cell inner membrane. Key component of the proton channel; it plays a direct role in the translocation of protons across the membrane. This chain is ATP synthase subunit a, found in Citrobacter koseri (strain ATCC BAA-895 / CDC 4225-83 / SGSC4696).